The following is a 279-amino-acid chain: Pleckstrin homology domain-containing family F member 1 (279 aa).

Positions 35–131 (VLLGEGVLTK…WISHIEECVR (97 aa)) constitute a PH domain. The FYVE-type zinc-finger motif lies at 152 to 212 (DKATDICMRC…VCSLCYRELA (61 aa)). The Zn(2+) site is built by cysteine 158, cysteine 161, cysteine 175, cysteine 178, cysteine 183, cysteine 186, cysteine 204, and cysteine 207. The interval 220–263 (AREGIGGSPPQLSHLGGTVCGASSGDDDDSDEDREGNGDGDWPT) is disordered. Acidic residues predominate over residues 244–253 (GDDDDSDEDR).

As to expression, widely expressed.

The protein resides in the nucleus. It is found in the cytoplasm. The protein localises to the perinuclear region. It localises to the lysosome. May induce apoptosis through the lysosomal-mitochondrial pathway. Translocates to the lysosome initiating the permeabilization of lysosomal membrane (LMP) and resulting in the release of CTSD and CTSL to the cytoplasm. Triggers the caspase-independent apoptosis by altering mitochondrial membrane permeabilization (MMP) resulting in the release of PDCD8. The chain is Pleckstrin homology domain-containing family F member 1 (Plekhf1) from Mus musculus (Mouse).